The following is a 63-amino-acid chain: Large ribosomal subunit protein bL28 (63 aa).

It belongs to the bacterial ribosomal protein bL28 family.

In Clostridium perfringens (strain ATCC 13124 / DSM 756 / JCM 1290 / NCIMB 6125 / NCTC 8237 / Type A), this protein is Large ribosomal subunit protein bL28.